Here is a 917-residue protein sequence, read N- to C-terminus: Transcriptional regulatory protein SEF1 (917 aa).

Positions 1 to 88 are disordered; the sequence is MKFEKGKVRI…SKPTGHRPVT (88 aa). Residues 13–27 are compositionally biased toward pro residues; it reads KPSPTPTNPQTPLPL. Low complexity predominate over residues 56–70; the sequence is SNSTASTPNSATPTS. Positions 71 to 81 are enriched in polar residues; it reads VGTPPQKTSKP. The segment at residues 90–120 is a DNA-binding region (zn(2)-C6 fungal-type); the sequence is CTFCRQHKIKCNASDNYPNPCERCKKMGLKC. A coiled-coil region spans residues 129–164; the sequence is RKGSQIQSLKSDVDELKAKIEMLTKNESLLTQALNQ. Disordered regions lie at residues 168–212 and 778–849; these read NHAS…ASPI and QQYP…PFIL. Residues 171–184 show a composition bias toward low complexity; sequence SQQQQSSGSQSQQQ. Positions 191–212 are enriched in polar residues; sequence RALSYTSANSSPQVAFSNASPI. The span at 778–827 shows a compositional bias: low complexity; that stretch reads QQYPMQQDQQQQEPSQQQQQKHSQQSQQYQQQQQSNQQQPHLQHQRQFQQ.

In terms of assembly, interacts with SSN3 and SFU1. Post-translationally, phosphorylated by SSN3 under iron-depleted conditions which leads to nuclear localization.

The protein localises to the cytoplasm. It is found in the nucleus. In terms of biological role, transcription factor which plays an essential role in virulence by activating the transcription of iron uptake genes such as FRE7 in iron-poor environments such as the host bloodstream and internal organs. Promotes commensalism in a mouse model of gastrointestinal infection. This Candida albicans (strain SC5314 / ATCC MYA-2876) (Yeast) protein is Transcriptional regulatory protein SEF1 (SEF1).